The chain runs to 568 residues: COMPASS component cclA (568 aa).

Positions 1–113 are disordered; that stretch reads MASDSGTPPP…MRYKLAPPKP (113 aa). 2 stretches are compositionally biased toward basic and acidic residues: residues 68–77 and 89–98; these read KESLKKRESK and PDPKHREPKQ. One can recognise a B30.2/SPRY domain in the interval 160 to 353; it reads ADPGFPSSLY…IPIRFKQHIY (194 aa).

This sequence belongs to the cclA family. In terms of assembly, component of the COMPASS complex.

It is found in the nucleus. It localises to the chromosome. The protein localises to the telomere. Functionally, component of the COMPASS (Set1C) complex that specifically mono-, di- and trimethylates histone H3 to form H3K4me1/2/3, which subsequently plays a role in telomere length maintenance and transcription elongation regulation. Controls the production of several secondary metabolites, including colletochlorins, higginsianins and sclerosporide. Plays a key role in mycelial growth, sporulation, spore germination and virulence. This chain is COMPASS component cclA, found in Colletotrichum higginsianum (strain IMI 349063) (Crucifer anthracnose fungus).